Consider the following 696-residue polypeptide: Elongation factor G 2 (696 aa).

Positions 5 to 281 constitute a tr-type G domain; the sequence is SKYRNIGIFA…AVVDYLPSPT (277 aa). GTP-binding positions include 14–21, 78–82, and 132–135; these read AHVDAGKT, DTPGH, and NKLD.

Belongs to the TRAFAC class translation factor GTPase superfamily. Classic translation factor GTPase family. EF-G/EF-2 subfamily.

Its subcellular location is the cytoplasm. In terms of biological role, catalyzes the GTP-dependent ribosomal translocation step during translation elongation. During this step, the ribosome changes from the pre-translocational (PRE) to the post-translocational (POST) state as the newly formed A-site-bound peptidyl-tRNA and P-site-bound deacylated tRNA move to the P and E sites, respectively. Catalyzes the coordinated movement of the two tRNA molecules, the mRNA and conformational changes in the ribosome. The protein is Elongation factor G 2 of Vibrio parahaemolyticus serotype O3:K6 (strain RIMD 2210633).